Reading from the N-terminus, the 373-residue chain is Ubiquitin carboxyl-terminal hydrolase 50 (373 aa).

Residues 44–364 (TGLRNLGNTC…TAYLLFYSCQ (321 aa)) enclose the USP domain. Cys53 serves as the catalytic Nucleophile. The Proton acceptor role is filled by His322.

Belongs to the peptidase C19 family.

The protein resides in the cytoplasm. It localises to the cytoskeleton. The protein localises to the microtubule organizing center. Its subcellular location is the centrosome. It is found in the nucleus. It carries out the reaction Thiol-dependent hydrolysis of ester, thioester, amide, peptide and isopeptide bonds formed by the C-terminal Gly of ubiquitin (a 76-residue protein attached to proteins as an intracellular targeting signal).. Deubiquitinating enzyme that removes conjugated ubiquitin from specific proteins to regulate different cellular processes. Regulates the inflammasome signaling pathway by deubiquitinating 'Lys-63'-linked polyubiquitination of the PYCARD/ASC adapter protein. Regulates the ubiquitination and stability of the ACE2 protein. Acts as a negative regulator of the G2/M checkpoint pathway, by preventing serine/threonine kinase WEE1 degradation, thereby repressing entry into mitosis following activation of the G2/M DNA damage checkpoint. The chain is Ubiquitin carboxyl-terminal hydrolase 50 (USP50) from Macaca fascicularis (Crab-eating macaque).